A 28-amino-acid polypeptide reads, in one-letter code: Aryl acylamidase (28 aa).

As to quaternary structure, homodimer.

It catalyses the reaction an anilide + H2O = aniline + a carboxylate + H(+). The protein is Aryl acylamidase of Nocardia globerula.